We begin with the raw amino-acid sequence, 707 residues long: Coiled-coil domain-containing protein 177 (707 aa).

Disordered regions lie at residues 1 to 65 (MVDP…EGGR) and 183 to 294 (PSAG…SALT). Low complexity-rich tracts occupy residues 38–49 (AASSASASASAA), 183–215 (PSAG…PSSA), and 243–258 (ALSS…YSGE). Ser311 carries the post-translational modification Phosphoserine. The stretch at 364–605 (GQWELQRVHA…LQHATQVAEE (242 aa)) forms a coiled coil. Disordered regions lie at residues 372-426 (HAKQ…RSEE), 454-581 (KLQQ…EREH), 597-637 (QHAT…RDED), and 652-707 (ERSE…LDRK). Composition is skewed to basic and acidic residues over residues 377-392 (RERE…EQGR), 399-426 (VEER…RSEE), 454-484 (KLQQ…ERAQ), 491-514 (QRQE…RHEA), 543-581 (ENYE…EREH), 618-637 (RLEK…RDED), and 652-664 (ERSE…RRSA). The segment covering 665–675 (LESARSTARAS) has biased composition (low complexity). Residues 677–707 (HVREKVREETNTRSFDRMVREAQLHASLDRK) show a composition bias toward basic and acidic residues.

The chain is Coiled-coil domain-containing protein 177 (CCDC177) from Homo sapiens (Human).